Consider the following 236-residue polypeptide: Phosphoribosylaminoimidazole-succinocarboxamide synthase (236 aa).

It belongs to the SAICAR synthetase family.

The enzyme catalyses 5-amino-1-(5-phospho-D-ribosyl)imidazole-4-carboxylate + L-aspartate + ATP = (2S)-2-[5-amino-1-(5-phospho-beta-D-ribosyl)imidazole-4-carboxamido]succinate + ADP + phosphate + 2 H(+). Its pathway is purine metabolism; IMP biosynthesis via de novo pathway; 5-amino-1-(5-phospho-D-ribosyl)imidazole-4-carboxamide from 5-amino-1-(5-phospho-D-ribosyl)imidazole-4-carboxylate: step 1/2. This is Phosphoribosylaminoimidazole-succinocarboxamide synthase from Rickettsia akari (strain Hartford).